A 239-amino-acid polypeptide reads, in one-letter code: MNKNIIIKSIAALTILTSVTGVGTTMVEGIQQTAKAENTVKQITNTNVAPYSGVTWMGAGTGFVVGNHTIITNKHVTYHMKVGDEIKAHPNGFYNNGGGLYKVTKIVDYPGKEDIAVVQVEEKSTQPKGRKFKDFTSKFNIASEAKENEPISVIGYPNPNGNKLQMYESTGKVLSVNGNIVSSDAIIQPGSSGSPILNSKHEAIGVIYAGNKPSGESTRGFAVYFSPEIKKFIADNLDK.

Positions 1-36 are cleaved as a signal peptide; it reads MNKNIIIKSIAALTILTSVTGVGTTMVEGIQQTAKA. Catalysis depends on charge relay system residues His-75, Asp-114, and Ser-192.

Belongs to the peptidase S1B family.

The protein resides in the secreted. This chain is Serine protease SplF (splF), found in Staphylococcus aureus (strain Mu50 / ATCC 700699).